Consider the following 152-residue polypeptide: MFRGASAINLDTKGRIAIPVRYREPLQLEHQGRIVITVDIQSACLLLYPIHEWELIEAKLLKLSDTDKTQRSLKRLLLGYAHEVELDGNGRILLPPPLRQYANLDKRIMLVGQLNKFELWDEQAWLQQIDECQETIRSEELANNERLADFSL.

2 SpoVT-AbrB domains span residues 5-52 (ASAI…PIHE) and 81-124 (AHEV…DEQA).

The protein belongs to the MraZ family. As to quaternary structure, forms oligomers.

Its subcellular location is the cytoplasm. It is found in the nucleoid. The chain is Transcriptional regulator MraZ from Shewanella putrefaciens (strain CN-32 / ATCC BAA-453).